The chain runs to 262 residues: MAHLLEKTRKITSILKRSEEQLQDELPYNAITRQLADIIHCNACIINSKGRLLGYFMRYKTNTDRVEQFFQTKIFPDDYVQGANMIYETEANLPVEHDMSIFPVESRDDFPDGLTTIAPIHVSGIRLGSLIIWRNDKKFEDEDLVLVEIASTVVGIQLLNFQREEDEKNIRRRTAVTMAVNTLSYSELRAVSAILGELNGNEGQLTASVIADRIGITRSVIVNALRKLESAGIIESRSLGMKGTYLKVLISDIFEEVKKRDY.

Residues 1-159 (MAHLLEKTRK…ASTVVGIQLL (159 aa)) form a GAF domain region. The segment at residues 207 to 226 (ASVIADRIGITRSVIVNALR) is a DNA-binding region (H-T-H motif).

This sequence belongs to the CodY family.

It localises to the cytoplasm. Its function is as follows. DNA-binding global transcriptional regulator which is involved in the adaptive response to starvation and acts by directly or indirectly controlling the expression of numerous genes in response to nutrient availability. During rapid exponential growth, CodY is highly active and represses genes whose products allow adaptation to nutrient depletion. In Streptococcus pneumoniae (strain ATCC BAA-255 / R6), this protein is Global transcriptional regulator CodY.